The sequence spans 120 residues: uncharacterized protein (120 aa).

One can recognise a PRD domain in the interval 13–119 (VIDKDICKGM…YGLWMAANEE (107 aa)).

This is an uncharacterized protein from Escherichia coli (strain K12).